The chain runs to 348 residues: Holliday junction branch migration complex subunit RuvB (348 aa).

The interval 1-181 is large ATPase domain (RuvB-L); that stretch reads MEERMITPQQ…FGVISRLEFY (181 aa). Residues Leu-20, Arg-21, Gly-62, Lys-65, Thr-66, Thr-67, Arg-171, Tyr-181, and Arg-218 each contribute to the ATP site. Thr-66 contributes to the Mg(2+) binding site. The tract at residues 182-252 is small ATPAse domain (RuvB-S); the sequence is EVEDLIRIIT…LAGKSLDRLE (71 aa). Positions 255 to 348 are head domain (RuvB-H); the sequence is PAGLDRIDQK…GDSLFDAAED (94 aa). Positions 310 and 315 each coordinate DNA. The disordered stretch occupies residues 329-348; that stretch reads VNSSHQEGGQGDSLFDAAED.

Belongs to the RuvB family. As to quaternary structure, homohexamer. Forms an RuvA(8)-RuvB(12)-Holliday junction (HJ) complex. HJ DNA is sandwiched between 2 RuvA tetramers; dsDNA enters through RuvA and exits via RuvB. An RuvB hexamer assembles on each DNA strand where it exits the tetramer. Each RuvB hexamer is contacted by two RuvA subunits (via domain III) on 2 adjacent RuvB subunits; this complex drives branch migration. In the full resolvosome a probable DNA-RuvA(4)-RuvB(12)-RuvC(2) complex forms which resolves the HJ.

It is found in the cytoplasm. The enzyme catalyses ATP + H2O = ADP + phosphate + H(+). The RuvA-RuvB-RuvC complex processes Holliday junction (HJ) DNA during genetic recombination and DNA repair, while the RuvA-RuvB complex plays an important role in the rescue of blocked DNA replication forks via replication fork reversal (RFR). RuvA specifically binds to HJ cruciform DNA, conferring on it an open structure. The RuvB hexamer acts as an ATP-dependent pump, pulling dsDNA into and through the RuvAB complex. RuvB forms 2 homohexamers on either side of HJ DNA bound by 1 or 2 RuvA tetramers; 4 subunits per hexamer contact DNA at a time. Coordinated motions by a converter formed by DNA-disengaged RuvB subunits stimulates ATP hydrolysis and nucleotide exchange. Immobilization of the converter enables RuvB to convert the ATP-contained energy into a lever motion, pulling 2 nucleotides of DNA out of the RuvA tetramer per ATP hydrolyzed, thus driving DNA branch migration. The RuvB motors rotate together with the DNA substrate, which together with the progressing nucleotide cycle form the mechanistic basis for DNA recombination by continuous HJ branch migration. Branch migration allows RuvC to scan DNA until it finds its consensus sequence, where it cleaves and resolves cruciform DNA. The chain is Holliday junction branch migration complex subunit RuvB from Desulfitobacterium hafniense (strain DSM 10664 / DCB-2).